The following is a 197-amino-acid chain: ATP-dependent Clp protease proteolytic subunit (197 aa).

The active-site Nucleophile is S98. The active site involves H123.

It belongs to the peptidase S14 family. In terms of assembly, fourteen ClpP subunits assemble into 2 heptameric rings which stack back to back to give a disk-like structure with a central cavity, resembling the structure of eukaryotic proteasomes. Forms large heterooligomeric complexes consisting of an ATPase component (ClpX, ClpC or ClpE) and a proteolytic component (ClpP).

It localises to the cytoplasm. The enzyme catalyses Hydrolysis of proteins to small peptides in the presence of ATP and magnesium. alpha-casein is the usual test substrate. In the absence of ATP, only oligopeptides shorter than five residues are hydrolyzed (such as succinyl-Leu-Tyr-|-NHMec, and Leu-Tyr-Leu-|-Tyr-Trp, in which cleavage of the -Tyr-|-Leu- and -Tyr-|-Trp bonds also occurs).. Its activity is regulated as follows. Low intrinsic peptidase activity is stimulated by ATP-binding subunits ClpC, ClpE and ClpX. Activity is disregulated by acyldepsipeptides (ADEP) antibiotics, which negate the need for ATP-binding subunits for activation and which makes it into an unregulated protease. Each ClpP subunit binds 1 ADEP molecule, which prevents binding of ClpX. ADEP binding causes conformational shifts that open the gated pore of the ring. Protease activity is inhibited by diisopropylfluoro-phosphate. Protease activity is inhibited by bortezomib, an oncology drug originally designed to work on the human proteasome. Cleaves peptides in various proteins in a process that requires ATP hydrolysis. Has a limited peptidase activity in the absence of ATP-binding subunits ClpC, ClpE or ClpX. Has a chymotrypsin-like activity. Plays a major role in the degradation of misfolded proteins. ClpXP is involved in the complete degradation of the site-2 clipped anti-sigma-W factor RsiW. This results in the release of SigW and the transcriptional activation of genes under the control of the sigma-W factor. Probably the major protease that degrades proteins tagged by trans-translation. The protein is ATP-dependent Clp protease proteolytic subunit of Bacillus subtilis (strain 168).